The primary structure comprises 292 residues: Probable porphobilinogen deaminase (292 aa).

Cys233 is modified (S-(dipyrrolylmethanemethyl)cysteine).

Belongs to the HMBS family. Requires dipyrromethane as cofactor.

The enzyme catalyses 4 porphobilinogen + H2O = hydroxymethylbilane + 4 NH4(+). The protein operates within porphyrin-containing compound metabolism; protoporphyrin-IX biosynthesis; coproporphyrinogen-III from 5-aminolevulinate: step 2/4. In terms of biological role, tetrapolymerization of the monopyrrole PBG into the hydroxymethylbilane pre-uroporphyrinogen in several discrete steps. The chain is Probable porphobilinogen deaminase (hemC) from Methanocaldococcus jannaschii (strain ATCC 43067 / DSM 2661 / JAL-1 / JCM 10045 / NBRC 100440) (Methanococcus jannaschii).